The following is a 303-amino-acid chain: Ferrochelatase (303 aa).

Residues H185 and E262 each coordinate Fe cation.

This sequence belongs to the ferrochelatase family.

It localises to the cytoplasm. It carries out the reaction heme b + 2 H(+) = protoporphyrin IX + Fe(2+). It functions in the pathway porphyrin-containing compound metabolism; protoheme biosynthesis; protoheme from protoporphyrin-IX: step 1/1. Catalyzes the ferrous insertion into protoporphyrin IX. This is Ferrochelatase from Campylobacter jejuni (strain RM1221).